The chain runs to 90 residues: Sec-independent protein translocase protein TatA (90 aa).

The chain crosses the membrane as a helical span at residues 1–21 (MGSMSIWHWVIVAVIVMLLFG). Residues 44 to 90 (AEDETPPAVQAAPPPAEPVRTIPHATETSPGTAIPASHLPGGERKPV) form a disordered region.

The protein belongs to the TatA/E family. The Tat system comprises two distinct complexes: a TatABC complex, containing multiple copies of TatA, TatB and TatC subunits, and a separate TatA complex, containing only TatA subunits. Substrates initially bind to the TatABC complex, which probably triggers association of the separate TatA complex to form the active translocon.

The protein resides in the cell inner membrane. Part of the twin-arginine translocation (Tat) system that transports large folded proteins containing a characteristic twin-arginine motif in their signal peptide across membranes. TatA could form the protein-conducting channel of the Tat system. In Methylobacterium radiotolerans (strain ATCC 27329 / DSM 1819 / JCM 2831 / NBRC 15690 / NCIMB 10815 / 0-1), this protein is Sec-independent protein translocase protein TatA.